A 363-amino-acid polypeptide reads, in one-letter code: Peptide chain release factor 1 (363 aa).

Gln-237 carries the post-translational modification N5-methylglutamine.

It belongs to the prokaryotic/mitochondrial release factor family. In terms of processing, methylated by PrmC. Methylation increases the termination efficiency of RF1.

It is found in the cytoplasm. Its function is as follows. Peptide chain release factor 1 directs the termination of translation in response to the peptide chain termination codons UAG and UAA. The sequence is that of Peptide chain release factor 1 (prfA) from Mycoplasma capricolum subsp. capricolum (strain California kid / ATCC 27343 / NCTC 10154).